A 415-amino-acid chain; its full sequence is Type II methyltransferase M.DdeI (415 aa).

One can recognise an SAM-dependent MTase C5-type domain in the interval 1–373; that stretch reads MNIIDLFAGC…ERISWYFENI (373 aa). The active site involves Cys-76.

This sequence belongs to the class I-like SAM-binding methyltransferase superfamily. C5-methyltransferase family.

The catalysed reaction is a 2'-deoxycytidine in DNA + S-adenosyl-L-methionine = a 5-methyl-2'-deoxycytidine in DNA + S-adenosyl-L-homocysteine + H(+). Functionally, a methylase that recognizes the double-stranded sequence 5'-CTNAG-3', methylates C-1 on both strands, and protects the DNA from cleavage by the DdeI endonuclease. In Desulfomicrobium norvegicum (strain DSM 1741 / NCIMB 8310) (Desulfovibrio baculatus (strain Norway 4)), this protein is Type II methyltransferase M.DdeI (ddeIM).